Reading from the N-terminus, the 943-residue chain is Glycine dehydrogenase (decarboxylating) (943 aa).

Residue lysine 695 is modified to N6-(pyridoxal phosphate)lysine.

It belongs to the GcvP family. The glycine cleavage system is composed of four proteins: P, T, L and H. It depends on pyridoxal 5'-phosphate as a cofactor.

The catalysed reaction is N(6)-[(R)-lipoyl]-L-lysyl-[glycine-cleavage complex H protein] + glycine + H(+) = N(6)-[(R)-S(8)-aminomethyldihydrolipoyl]-L-lysyl-[glycine-cleavage complex H protein] + CO2. In terms of biological role, the glycine cleavage system catalyzes the degradation of glycine. The P protein binds the alpha-amino group of glycine through its pyridoxal phosphate cofactor; CO(2) is released and the remaining methylamine moiety is then transferred to the lipoamide cofactor of the H protein. This chain is Glycine dehydrogenase (decarboxylating), found in Jannaschia sp. (strain CCS1).